The sequence spans 147 residues: Cilia- and flagella-associated protein 90 (147 aa).

Residues 1-36 are disordered; sequence MEDDEEETTASTLRGKPRPPPVSAQSAFSYIPPRRL.

Microtubule inner protein component of sperm flagellar doublet microtubules.

It is found in the cytoplasm. The protein resides in the cytoskeleton. Its subcellular location is the cilium axoneme. The protein localises to the flagellum axoneme. In terms of biological role, microtubule inner protein (MIP) part of the dynein-decorated doublet microtubules (DMTs) in cilia axoneme, which is required for motile cilia beating. The protein is Cilia- and flagella-associated protein 90 of Homo sapiens (Human).